Here is a 372-residue protein sequence, read N- to C-terminus: Queuine tRNA-ribosyltransferase (372 aa).

Aspartate 90 functions as the Proton acceptor in the catalytic mechanism. Substrate-binding positions include 90 to 94 (DSGGF), aspartate 144, glutamine 193, and glycine 220. The interval 251-257 (GVGTPED) is RNA binding. The active-site Nucleophile is aspartate 270. Residues 275-279 (TRNAR) form an RNA binding; important for wobble base 34 recognition region. Positions 308, 310, 313, and 339 each coordinate Zn(2+).

This sequence belongs to the queuine tRNA-ribosyltransferase family. As to quaternary structure, homodimer. Within each dimer, one monomer is responsible for RNA recognition and catalysis, while the other monomer binds to the replacement base PreQ1. Requires Zn(2+) as cofactor.

The enzyme catalyses 7-aminomethyl-7-carbaguanine + guanosine(34) in tRNA = 7-aminomethyl-7-carbaguanosine(34) in tRNA + guanine. The protein operates within tRNA modification; tRNA-queuosine biosynthesis. Catalyzes the base-exchange of a guanine (G) residue with the queuine precursor 7-aminomethyl-7-deazaguanine (PreQ1) at position 34 (anticodon wobble position) in tRNAs with GU(N) anticodons (tRNA-Asp, -Asn, -His and -Tyr). Catalysis occurs through a double-displacement mechanism. The nucleophile active site attacks the C1' of nucleotide 34 to detach the guanine base from the RNA, forming a covalent enzyme-RNA intermediate. The proton acceptor active site deprotonates the incoming PreQ1, allowing a nucleophilic attack on the C1' of the ribose to form the product. After dissociation, two additional enzymatic reactions on the tRNA convert PreQ1 to queuine (Q), resulting in the hypermodified nucleoside queuosine (7-(((4,5-cis-dihydroxy-2-cyclopenten-1-yl)amino)methyl)-7-deazaguanosine). This chain is Queuine tRNA-ribosyltransferase, found in Sulfurimonas denitrificans (strain ATCC 33889 / DSM 1251) (Thiomicrospira denitrificans (strain ATCC 33889 / DSM 1251)).